Consider the following 407-residue polypeptide: BMP-like protein unc-129 (407 aa).

The N-terminal stretch at 1–18 (MRRLPIVLLLSVFSIANC) is a signal peptide. N-linked (GlcNAc...) asparagine glycosylation is found at N27, N42, and N211. A disordered region spans residues 252–283 (DDREPIKRKNGKKNSLSEEISSEDVWQGFGEE). N-linked (GlcNAc...) asparagine glycosylation is present at N395.

The protein belongs to the TGF-beta family. As to quaternary structure, interacts with netrin receptor unc-5; the interaction is direct.

Its subcellular location is the secreted. The protein resides in the extracellular space. Its function is as follows. Required for the migration of axonal growth-cones and distal tip cells (DTC) along the dorsal-ventral axis of the body wall. Acts cell nonautonomously and independently of the classical daf-4, sma-6 or daf-1 TGFbeta receptor signaling. During axon migration, facilitates long-range repulsive guidance of unc-6/netrin by enhancing unc-5-unc-40 signaling at the expense of unc-5 alone signaling, probably through direct interaction with receptor unc-5. Involved in cell-cell contact formation in sensory rays in the developing male tail, via a pathway involving plx-2 and mab-20/semaphorin-2A. The chain is BMP-like protein unc-129 from Caenorhabditis elegans.